The primary structure comprises 236 residues: Bidirectional sugar transporter SWEET2 (236 aa).

Over 1 to 15 the chain is Extracellular; sequence MDVFAFNASLSMCKD. N7 carries N-linked (GlcNAc...) asparagine glycosylation. Residues 16–36 traverse the membrane as a helical segment; that stretch reads VAGIAGNIFAFGLFVSPMPTF. The region spanning 18-103 is the MtN3/slv 1 domain; sequence GIAGNIFAFG…ILFIMHTDKK (86 aa). Residues 37-50 are Cytoplasmic-facing; sequence RRIMRNKSTEQFSG. Residues 51 to 71 traverse the membrane as a helical segment; the sequence is LPYIYALLNCLICLWYGTPFI. The Extracellular segment spans residues 72-76; that stretch reads SHSNA. The chain crosses the membrane as a helical span at residues 77-97; it reads MLMTVNSVGATFQLCYIILFI. Over 98 to 108 the chain is Cytoplasmic; that stretch reads MHTDKKNKMKM. The helical transmembrane segment at 109 to 129 threads the bilayer; that stretch reads LGLLFVVFAVVGVIVAGSLQI. Residues 130–137 lie on the Extracellular side of the membrane; that stretch reads PDQLTRWY. The helical transmembrane segment at 138–158 threads the bilayer; sequence FVGFLSCGSLVSMFASPLFVI. In terms of domain architecture, MtN3/slv 2 spans 138 to 221; the sequence is FVGFLSCGSL…LALYCYYHRN (84 aa). The Cytoplasmic portion of the chain corresponds to 159 to 170; that stretch reads NLVIRTKSVEFM. The helical transmembrane segment at 171 to 191 threads the bilayer; that stretch reads PFYLSLSTFLMSASFLLYGLF. At 192 to 194 the chain is on the extracellular side; it reads NSD. A helical transmembrane segment spans residues 195-215; sequence AFVYTPNGIGTILGIVQLALY. Topologically, residues 216 to 236 are cytoplasmic; the sequence is CYYHRNSIEEETKEPLIVSYV.

This sequence belongs to the SWEET sugar transporter family. As to quaternary structure, forms heterooligomers with SWEET17.

It localises to the cell membrane. Mediates both low-affinity uptake and efflux of sugar across the plasma membrane. This chain is Bidirectional sugar transporter SWEET2, found in Arabidopsis thaliana (Mouse-ear cress).